Reading from the N-terminus, the 243-residue chain is MSIERITYDNFQNDPFINELDINDETKGAYEILKWAYQTYENDIVYSCSFGAESMVLIDLISQIKPDAQIVFLDTDLHFQETYDLIDRVKDKYPQLRIKMKKPELTLEEQGEKYNPALWKNDPNQCCYIRKIKPLEDVLSGAVAWISGLRRAQSPTRAHTNFINKDERFKSIKVCPLIYWTEEEVWSYIRDKDLPYNELHDQNYPSIGCIPCTSPVFDSNDSRAGRWSNSSKTECGLHVTDKP.

Residues cysteine 126, cysteine 127, cysteine 209, and cysteine 212 each contribute to the [4Fe-4S] cluster site. The active-site Nucleophile; cysteine thiosulfonate intermediate is cysteine 235.

The protein belongs to the PAPS reductase family. CysH subfamily. The cofactor is [4Fe-4S] cluster.

It localises to the cytoplasm. It carries out the reaction [thioredoxin]-disulfide + sulfite + AMP + 2 H(+) = adenosine 5'-phosphosulfate + [thioredoxin]-dithiol. It functions in the pathway sulfur metabolism; hydrogen sulfide biosynthesis; sulfite from sulfate. Catalyzes the formation of sulfite from adenosine 5'-phosphosulfate (APS) using thioredoxin as an electron donor. The protein is Adenosine 5'-phosphosulfate reductase of Staphylococcus epidermidis (strain ATCC 35984 / DSM 28319 / BCRC 17069 / CCUG 31568 / BM 3577 / RP62A).